The following is a 397-amino-acid chain: 1-deoxy-D-xylulose 5-phosphate reductoisomerase (397 aa).

6 residues coordinate NADPH: threonine 10, glycine 11, serine 12, isoleucine 13, glutamine 38, and asparagine 123. Lysine 124 contacts 1-deoxy-D-xylulose 5-phosphate. Glutamate 125 contacts NADPH. Aspartate 149 provides a ligand contact to Mn(2+). 1-deoxy-D-xylulose 5-phosphate is bound by residues serine 150, glutamate 151, serine 185, and histidine 208. Residue glutamate 151 coordinates Mn(2+). Position 214 (glycine 214) interacts with NADPH. 1-deoxy-D-xylulose 5-phosphate-binding residues include serine 221, asparagine 226, lysine 227, and glutamate 230. Residue glutamate 230 participates in Mn(2+) binding.

Belongs to the DXR family. Mg(2+) serves as cofactor. Mn(2+) is required as a cofactor.

The enzyme catalyses 2-C-methyl-D-erythritol 4-phosphate + NADP(+) = 1-deoxy-D-xylulose 5-phosphate + NADPH + H(+). Its pathway is isoprenoid biosynthesis; isopentenyl diphosphate biosynthesis via DXP pathway; isopentenyl diphosphate from 1-deoxy-D-xylulose 5-phosphate: step 1/6. Functionally, catalyzes the NADPH-dependent rearrangement and reduction of 1-deoxy-D-xylulose-5-phosphate (DXP) to 2-C-methyl-D-erythritol 4-phosphate (MEP). This chain is 1-deoxy-D-xylulose 5-phosphate reductoisomerase, found in Idiomarina loihiensis (strain ATCC BAA-735 / DSM 15497 / L2-TR).